The sequence spans 356 residues: S-adenosylmethionine:tRNA ribosyltransferase-isomerase (356 aa).

It belongs to the QueA family. As to quaternary structure, monomer.

Its subcellular location is the cytoplasm. It catalyses the reaction 7-aminomethyl-7-carbaguanosine(34) in tRNA + S-adenosyl-L-methionine = epoxyqueuosine(34) in tRNA + adenine + L-methionine + 2 H(+). Its pathway is tRNA modification; tRNA-queuosine biosynthesis. Its function is as follows. Transfers and isomerizes the ribose moiety from AdoMet to the 7-aminomethyl group of 7-deazaguanine (preQ1-tRNA) to give epoxyqueuosine (oQ-tRNA). This Serratia proteamaculans (strain 568) protein is S-adenosylmethionine:tRNA ribosyltransferase-isomerase.